Here is a 1894-residue protein sequence, read N- to C-terminus: Plexin-A4 (1894 aa).

Residues 1 to 23 form the signal peptide; the sequence is MKAMPWNWTCLLSHLLMVGMGSS. One can recognise a Sema domain in the interval 24–507; it reads TLLTRQPAPL…SERQLTRVPV (484 aa). Residues 24 to 1237 are Extracellular-facing; the sequence is TLLTRQPAPL…IAPDSPLSLP (1214 aa). Disulfide bonds link Cys-95–Cys-104, Cys-130–Cys-138, Cys-284–Cys-405, Cys-300–Cys-356, Cys-374–Cys-393, Cys-510–Cys-527, Cys-516–Cys-558, Cys-519–Cys-536, Cys-530–Cys-542, and Cys-593–Cys-612. The region spanning 509 to 559 is the PSI 1 domain; it reads SCGQYQSCGECLGSGDPHCGWCVLHNTCTRKERCERSKEPRRFASEMKQCV. An N-linked (GlcNAc...) asparagine glycan is attached at Asn-655. PSI domains are found at residues 655-702 and 803-856; these read NCSV…EDCP and KCGA…SKCT. IPT/TIG domains follow at residues 858–952, 954–1037, 1040–1139, and 1142–1230; these read PRIT…YYFM, LTLS…FQYV, PTIV…FTYY, and PVFE…YIAP. Residues Asn-1007, Asn-1132, and Asn-1180 are each glycosylated (N-linked (GlcNAc...) asparagine). A helical membrane pass occupies residues 1238–1258; that stretch reads AIVSIAVAGGLLIIFIVAVLI. Residues 1259-1894 are Cytoplasmic-facing; it reads AYKRKSRESD…QVITLMSLDS (636 aa). Position 1350 is an N6-acetyllysine (Lys-1350).

It belongs to the plexin family. In terms of assembly, interacts with NRP1 and NRP2.

Its subcellular location is the cell membrane. Its function is as follows. Coreceptor for SEMA3A. Necessary for signaling by class 3 semaphorins and subsequent remodeling of the cytoskeleton. Plays a role in axon guidance in the developing nervous system. Class 3 semaphorins bind to a complex composed of a neuropilin and a plexin. The plexin modulates the affinity of the complex for specific semaphorins, and its cytoplasmic domain is required for the activation of down-stream signaling events in the cytoplasm. The protein is Plexin-A4 (PLXNA4) of Homo sapiens (Human).